A 226-amino-acid polypeptide reads, in one-letter code: Deoxyribose-phosphate aldolase (226 aa).

Aspartate 94 (proton donor/acceptor) is an active-site residue. Lysine 156 functions as the Schiff-base intermediate with acetaldehyde in the catalytic mechanism. Residue lysine 185 is the Proton donor/acceptor of the active site.

This sequence belongs to the DeoC/FbaB aldolase family. DeoC type 1 subfamily.

The protein localises to the cytoplasm. The catalysed reaction is 2-deoxy-D-ribose 5-phosphate = D-glyceraldehyde 3-phosphate + acetaldehyde. It participates in carbohydrate degradation; 2-deoxy-D-ribose 1-phosphate degradation; D-glyceraldehyde 3-phosphate and acetaldehyde from 2-deoxy-alpha-D-ribose 1-phosphate: step 2/2. Catalyzes a reversible aldol reaction between acetaldehyde and D-glyceraldehyde 3-phosphate to generate 2-deoxy-D-ribose 5-phosphate. This is Deoxyribose-phosphate aldolase from Burkholderia orbicola (strain MC0-3).